A 176-amino-acid polypeptide reads, in one-letter code: NAD(P)H-quinone oxidoreductase subunit 6, chloroplastic (176 aa).

5 consecutive transmembrane segments (helical) span residues 10 to 30 (FLLVFLGSGLILGGLGVVLLP), 32 to 52 (PIYSAFSLGLVLVCTSLFYIL), 61 to 81 (AQLLIYVGAINVLIIFAVMFM), 92 to 112 (LWTVGDGITSMVCISLFISLI), and 152 to 172 (FFLPFELISIILLVALIGAIA).

This sequence belongs to the complex I subunit 6 family. In terms of assembly, NDH is composed of at least 16 different subunits, 5 of which are encoded in the nucleus.

The protein resides in the plastid. The protein localises to the chloroplast thylakoid membrane. It catalyses the reaction a plastoquinone + NADH + (n+1) H(+)(in) = a plastoquinol + NAD(+) + n H(+)(out). The enzyme catalyses a plastoquinone + NADPH + (n+1) H(+)(in) = a plastoquinol + NADP(+) + n H(+)(out). In terms of biological role, NDH shuttles electrons from NAD(P)H:plastoquinone, via FMN and iron-sulfur (Fe-S) centers, to quinones in the photosynthetic chain and possibly in a chloroplast respiratory chain. The immediate electron acceptor for the enzyme in this species is believed to be plastoquinone. Couples the redox reaction to proton translocation, and thus conserves the redox energy in a proton gradient. This Nicotiana tabacum (Common tobacco) protein is NAD(P)H-quinone oxidoreductase subunit 6, chloroplastic (ndhG).